The sequence spans 152 residues: UPF0266 membrane protein YobD (152 aa).

The next 3 membrane-spanning stretches (helical) occupy residues 6–26 (LVLI…QFIM), 45–65 (VDSV…VTSH), and 67–87 (AQMT…IFWI).

The protein belongs to the UPF0266 family.

The protein resides in the cell inner membrane. The polypeptide is UPF0266 membrane protein YobD (Salmonella paratyphi B (strain ATCC BAA-1250 / SPB7)).